The primary structure comprises 211 residues: Uridine kinase (211 aa).

12-19 contributes to the ATP binding site; it reads GGTGSGKT.

It belongs to the uridine kinase family.

It is found in the cytoplasm. It carries out the reaction uridine + ATP = UMP + ADP + H(+). The catalysed reaction is cytidine + ATP = CMP + ADP + H(+). It functions in the pathway pyrimidine metabolism; CTP biosynthesis via salvage pathway; CTP from cytidine: step 1/3. It participates in pyrimidine metabolism; UMP biosynthesis via salvage pathway; UMP from uridine: step 1/1. In Halalkalibacterium halodurans (strain ATCC BAA-125 / DSM 18197 / FERM 7344 / JCM 9153 / C-125) (Bacillus halodurans), this protein is Uridine kinase.